Consider the following 66-residue polypeptide: Large ribosomal subunit protein uL30 (66 aa).

This sequence belongs to the universal ribosomal protein uL30 family. As to quaternary structure, part of the 50S ribosomal subunit.

The protein is Large ribosomal subunit protein uL30 of Chelativorans sp. (strain BNC1).